Consider the following 250-residue polypeptide: Acyl-coenzyme A diphosphatase fit1 (250 aa).

Residues 1 to 23 (MTEKTASHYWNEETSILKLRRKD) are Cytoplasmic-facing. A helical transmembrane segment spans residues 24 to 44 (ILLFEIYATTLLLGSIYSIYV). Topologically, residues 45-58 (DKWSITSYFGNSKN) are lumenal. The chain crosses the membrane as a helical span at residues 59–79 (LINLIFVKRGWFWTSLVYFYH). The Cytoplasmic portion of the chain corresponds to 80-95 (AWDQKRNKIDFKFISR). The chain crosses the membrane as a helical span at residues 96–116 (YIVATLWWMFVTQWFIGPGLI). Topologically, residues 117–160 (DRTFALSGGSCKNFDGDSSVFIPLTASTCKGLNGSWSGGHDLSG) are lumenal. N-linked (GlcNAc...) asparagine glycosylation occurs at asparagine 149. The active site involves histidine 161. Residues 161 to 181 (HVFLLTHSSLFMLSENFSFIL) traverse the membrane as a helical segment. At 182–191 (NNGIKATSTK) the chain is on the cytoplasmic side. The helical transmembrane segment at 192–212 (VLFGLLGLWWWMLFVTASFYH) threads the bilayer. Histidine 212 is an active-site residue. Residue threonine 213 is a topological domain, lumenal. A helical transmembrane segment spans residues 214-234 (TFEKCTGFFSGILEWSIVYVF). Topologically, residues 235-250 (SSRMPAVADLLGSSDY) are cytoplasmic.

It belongs to the FIT family. Fungal FIT2B/SCS3 subfamily.

The protein resides in the endoplasmic reticulum membrane. It catalyses the reaction an acyl-CoA + H2O = an acyl-4'-phosphopantetheine + adenosine 3',5'-bisphosphate + 2 H(+). The enzyme catalyses (9Z)-octadecenoyl-CoA + H2O = S-(9Z-octadecenoyl)-4'-phosphopantetheine + adenosine 3',5'-bisphosphate + 2 H(+). The catalysed reaction is (5Z,8Z,11Z,14Z)-eicosatetraenoyl-CoA + H2O = S-(5Z,8Z,11Z,14Z-eicosatetraenoyl)-4'-phosphopantetheine + adenosine 3',5'-bisphosphate + 2 H(+). It carries out the reaction hexadecanoyl-CoA + H2O = S-hexadecanoyl-4'-phosphopantetheine + adenosine 3',5'-bisphosphate + 2 H(+). Functionally, fatty acyl-coenzyme A (CoA) diphosphatase that hydrolyzes fatty acyl-CoA to yield acyl-4'-phosphopantetheine and adenosine 3',5'-bisphosphate. Preferentially hydrolyzes unsaturated long-chain acyl-CoA substrates in the endoplasmic reticulum (ER) lumen. This catalytic activity is required for maintaining ER structure and for lipid droplets (LDs) biogenesis, which are lipid storage organelles involved in maintaining lipid and energy homeostasis. May directly bind to diacylglycerol (DAGs) and triacylglycerol, which is also important for LD biogenesis. May support directional budding of nacent LDs from the ER into the cytosol by reducing DAG levels at sites of LD formation. May play a role in the regulation of cell morphology and cytoskeletal organization. The protein is Acyl-coenzyme A diphosphatase fit1 of Schizosaccharomyces pombe (strain 972 / ATCC 24843) (Fission yeast).